A 177-amino-acid polypeptide reads, in one-letter code: MRILPVVAAVTAAFLVVACSSPTPPKGVTVVNNFDAKRYLGTWYEIARFDHRFERGLDKVTATYSLRDDGGINVINKGYNPDREMWQKTEGKAYFTGDPSTAALKVSFFGPFYGGYNVIALDREYRHALVCGPDRDYLWILSRTPTISDEMKQQMLAIATREGFEVNKLIWVKQPGA.

The first 18 residues, Met-1–Ala-18, serve as a signal peptide directing secretion. Residue Cys-19 is the site of N-palmitoyl cysteine attachment. Residue Cys-19 is the site of S-diacylglycerol cysteine attachment.

This sequence belongs to the calycin superfamily. Lipocalin family. As to quaternary structure, homodimer.

Its subcellular location is the cell outer membrane. Functionally, involved in the storage or transport of lipids necessary for membrane maintenance under stressful conditions. Displays a binding preference for lysophospholipids. The protein is Outer membrane lipoprotein Blc of Citrobacter freundii.